Here is a 652-residue protein sequence, read N- to C-terminus: Set1 complex component ash2 (652 aa).

The disordered stretch occupies residues 1–32 (MLAHGSNDYGVSLKGNKTGSSPSKASSLNWNE). The span at 15–32 (GNKTGSSPSKASSLNWNE) shows a compositional bias: polar residues. A PHD-type zinc finger spans residues 40 to 94 (NTYCYCGKDRNLRFPDLQCSVCLNMFHLSCLSPPCTSMMGFSTNYQFVCKHCTED). The Zn(2+) site is built by Cys43, Cys45, Cys58, Cys61, His66, Cys69, Cys88, and Cys91. The segment at 234 to 270 (RLVETETPPPSSSKLKEDYKDSKREMKRSNTPWSNAS) is disordered. Residues 247-261 (KLKEDYKDSKREMKR) are compositionally biased toward basic and acidic residues. One can recognise a B30.2/SPRY domain in the interval 330 to 519 (EAAKDLPNVM…KHNRYIDLPY (190 aa)).

The protein belongs to the cclA family. Component of the Set1 complex composed of ash2, sdc1, set1, shg1, spp1, swd1, swd2 and swd3. Component of the Lid2 complex composed of ash2, jmj3, lid2, sdc1 and snt2.

It localises to the nucleus. Functionally, component of the COMPASS (Set1C) complex that specifically mono-, di- and trimethylates histone H3 to form H3K4me1/2/3, which subsequently plays a role in telomere length maintenance and transcription elongation regulation. Regulates MAPK pathway and sporulation through H3K4 methylation. The polypeptide is Set1 complex component ash2 (Schizosaccharomyces pombe (strain 972 / ATCC 24843) (Fission yeast)).